The sequence spans 425 residues: Enolase (425 aa).

Glutamine 162 is a (2R)-2-phosphoglycerate binding site. Residue glutamate 204 is the Proton donor of the active site. Residues aspartate 241, glutamate 282, and aspartate 309 each contribute to the Mg(2+) site. Residues lysine 334, arginine 363, serine 364, and lysine 385 each coordinate (2R)-2-phosphoglycerate. The active-site Proton acceptor is lysine 334.

It belongs to the enolase family. The cofactor is Mg(2+).

The protein resides in the cytoplasm. Its subcellular location is the secreted. It is found in the cell surface. It catalyses the reaction (2R)-2-phosphoglycerate = phosphoenolpyruvate + H2O. It participates in carbohydrate degradation; glycolysis; pyruvate from D-glyceraldehyde 3-phosphate: step 4/5. Its function is as follows. Catalyzes the reversible conversion of 2-phosphoglycerate (2-PG) into phosphoenolpyruvate (PEP). It is essential for the degradation of carbohydrates via glycolysis. This is Enolase from Corynebacterium efficiens (strain DSM 44549 / YS-314 / AJ 12310 / JCM 11189 / NBRC 100395).